The following is a 164-amino-acid chain: FMN reductase (NADH) RutF (164 aa).

Belongs to the non-flavoprotein flavin reductase family. RutF subfamily.

It catalyses the reaction FMNH2 + NAD(+) = FMN + NADH + 2 H(+). Functionally, catalyzes the reduction of FMN to FMNH2 which is used to reduce pyrimidine by RutA via the Rut pathway. The protein is FMN reductase (NADH) RutF of Klebsiella variicola (strain At-22).